The following is a 237-amino-acid chain: Proteasome subunit alpha (237 aa).

The protein belongs to the peptidase T1A family. In terms of assembly, the 20S proteasome core is composed of 14 alpha and 14 beta subunits that assemble into four stacked heptameric rings, resulting in a barrel-shaped structure. The two inner rings, each composed of seven catalytic beta subunits, are sandwiched by two outer rings, each composed of seven alpha subunits. The catalytic chamber with the active sites is on the inside of the barrel. Has a gated structure, the ends of the cylinder being occluded by the N-termini of the alpha-subunits. Is capped by the proteasome-associated ATPase, ARC.

It is found in the cytoplasm. It functions in the pathway protein degradation; proteasomal Pup-dependent pathway. The formation of the proteasomal ATPase ARC-20S proteasome complex, likely via the docking of the C-termini of ARC into the intersubunit pockets in the alpha-rings, may trigger opening of the gate for substrate entry. Interconversion between the open-gate and close-gate conformations leads to a dynamic regulation of the 20S proteasome proteolysis activity. In terms of biological role, component of the proteasome core, a large protease complex with broad specificity involved in protein degradation. The sequence is that of Proteasome subunit alpha from Kineococcus radiotolerans (strain ATCC BAA-149 / DSM 14245 / SRS30216).